A 312-amino-acid polypeptide reads, in one-letter code: Methionyl-tRNA formyltransferase (312 aa).

(6S)-5,6,7,8-tetrahydrofolate is bound at residue 112–115; that stretch reads SLLP.

It belongs to the Fmt family.

The catalysed reaction is L-methionyl-tRNA(fMet) + (6R)-10-formyltetrahydrofolate = N-formyl-L-methionyl-tRNA(fMet) + (6S)-5,6,7,8-tetrahydrofolate + H(+). Functionally, attaches a formyl group to the free amino group of methionyl-tRNA(fMet). The formyl group appears to play a dual role in the initiator identity of N-formylmethionyl-tRNA by promoting its recognition by IF2 and preventing the misappropriation of this tRNA by the elongation apparatus. This is Methionyl-tRNA formyltransferase from Syntrophus aciditrophicus (strain SB).